A 546-amino-acid polypeptide reads, in one-letter code: Glutathione synthetase, chloroplastic (546 aa).

Residues 1 to 63 (MGSGCSSPSI…SPLKCAKVPE (63 aa)) constitute a chloroplast transit peptide. Arg-200 serves as a coordination point for substrate. Residue Glu-216 coordinates ATP. Glu-216 and Asn-218 together coordinate Mg(2+). Residues 220–223 (ISSS), 288–290 (ERN), Gln-294, and 342–345 (RAGY) each bind substrate. ATP contacts are provided by residues Lys-381, 435-444 (KPQREGGGNN), Tyr-446, 471-474 (MQRI), and Glu-497. Residue Glu-439 participates in Mg(2+) binding. Residue Arg-522 coordinates substrate. ATP contacts are provided by Lys-524 and Glu-530. 533-534 (VA) provides a ligand contact to substrate.

This sequence belongs to the eukaryotic GSH synthase family. As to quaternary structure, homodimer. Requires Mg(2+) as cofactor.

The protein localises to the plastid. It is found in the chloroplast. The enzyme catalyses gamma-L-glutamyl-L-cysteine + glycine + ATP = glutathione + ADP + phosphate + H(+). It participates in sulfur metabolism; glutathione biosynthesis; glutathione from L-cysteine and L-glutamate: step 2/2. In Solanum lycopersicum (Tomato), this protein is Glutathione synthetase, chloroplastic (GSH2).